The chain runs to 574 residues: Craniofacial development protein 2 (574 aa).

Basic and acidic residues-rich tracts occupy residues 1 to 16, 23 to 37, 45 to 55, 86 to 111, and 134 to 172; these read MEEV…KAED, ECHE…KEDE, EQTKGIKRKAE, SEKE…KEDE, and TGEE…DRQQ. Disordered regions lie at residues 1–222 and 488–574; these read MEEV…PAVD and TRPF…SGVF. Residues 199–208 are compositionally biased toward polar residues; the sequence is KTGTNASSKN. The hydrophilic stretch occupies residues 493 to 572; the sequence is GTNEADDTSE…AVPSLPAGSG (80 aa). Basic and acidic residues predominate over residues 502–516; the sequence is EESKPSSEQKGKEKP. Positions 518–528 are enriched in low complexity; it reads ASVPSAVSSVP.

It localises to the cytoplasm. It is found in the nucleus. The chain is Craniofacial development protein 2 (CFDP2) from Tragulus javanicus (Lesser Malay chevrotain).